Here is a 117-residue protein sequence, read N- to C-terminus: Large ribosomal subunit protein uL18 (117 aa).

This sequence belongs to the universal ribosomal protein uL18 family. In terms of assembly, part of the 50S ribosomal subunit; part of the 5S rRNA/L5/L18/L25 subcomplex. Contacts the 5S and 23S rRNAs.

This is one of the proteins that bind and probably mediate the attachment of the 5S RNA into the large ribosomal subunit, where it forms part of the central protuberance. This is Large ribosomal subunit protein uL18 from Klebsiella pneumoniae subsp. pneumoniae (strain ATCC 700721 / MGH 78578).